A 151-amino-acid chain; its full sequence is Probable cGMP 3',5'-cyclic phosphodiesterase subunit delta (151 aa).

Belongs to the PDE6D/unc-119 family. In terms of assembly, interacts with Pde6.

Its subcellular location is the nucleus. It localises to the cytoplasm. The chain is Probable cGMP 3',5'-cyclic phosphodiesterase subunit delta from Drosophila persimilis (Fruit fly).